Here is a 79-residue protein sequence, read N- to C-terminus: MSTIEERVKKIVVEQLGVKEEEVTNSASFVDDLGADSLDTVELVMALEEEFECEIPDEEAEKITSVQQAIDYVKVHVKS.

Positions 2 to 77 constitute a Carrier domain; the sequence is STIEERVKKI…QAIDYVKVHV (76 aa). Ser37 is subject to O-(pantetheine 4'-phosphoryl)serine.

It belongs to the acyl carrier protein (ACP) family. In terms of processing, 4'-phosphopantetheine is transferred from CoA to a specific serine of apo-ACP by AcpS. This modification is essential for activity because fatty acids are bound in thioester linkage to the sulfhydryl of the prosthetic group.

Its subcellular location is the cytoplasm. It participates in lipid metabolism; fatty acid biosynthesis. Functionally, carrier of the growing fatty acid chain in fatty acid biosynthesis. The polypeptide is Acyl carrier protein (Xanthomonas albilineans).